The chain runs to 196 residues: Putative 3-methyladenine DNA glycosylase (196 aa).

This sequence belongs to the DNA glycosylase MPG family.

The polypeptide is Putative 3-methyladenine DNA glycosylase (Bacillus licheniformis (strain ATCC 14580 / DSM 13 / JCM 2505 / CCUG 7422 / NBRC 12200 / NCIMB 9375 / NCTC 10341 / NRRL NRS-1264 / Gibson 46)).